The sequence spans 102 residues: Small ribosomal subunit protein uS10 (102 aa).

Belongs to the universal ribosomal protein uS10 family. As to quaternary structure, part of the 30S ribosomal subunit.

Its function is as follows. Involved in the binding of tRNA to the ribosomes. This Cereibacter sphaeroides (strain ATCC 17029 / ATH 2.4.9) (Rhodobacter sphaeroides) protein is Small ribosomal subunit protein uS10.